A 237-amino-acid polypeptide reads, in one-letter code: Glutathione S-transferase L1 (237 aa).

Residues 29 to 110 form the GST N-terminal domain; the sequence is GTTRLYISYT…YVDSNFDGPS (82 aa). Glutathione contacts are provided by residues 39–40, 67–68, 81–82, and 94–95; these read CP, NR, KV, and ES. Residues 112–232 enclose the GST C-terminal domain; the sequence is YPEDSAKREF…KTDSEYVVNY (121 aa).

The protein belongs to the GST superfamily. Lambda family.

Its subcellular location is the cytoplasm. The protein localises to the cytosol. It catalyses the reaction RX + glutathione = an S-substituted glutathione + a halide anion + H(+). In terms of biological role, catalyzes the glutathione-dependent reduction of S-glutathionylquercetin to quercetin. In vitro, possesses glutathione-dependent thiol transferase activity toward 2-hydroxyethyl disulfide (HED). This is Glutathione S-transferase L1 (GSTL1) from Arabidopsis thaliana (Mouse-ear cress).